The primary structure comprises 249 residues: ATP synthase subunit a (249 aa).

6 helical membrane passes run 30 to 50, 84 to 104, 113 to 133, 143 to 163, 196 to 216, and 221 to 241; these read SAYMLLAVAIISLLMIGGSAG, FFPLVFSLFMFIMVSNMVGII, HIIVTAALAFLVFFTVLIYGF, IFVPSGVPGFILPLVVFIEVF, LLAGLGIAGYFGAVLPLGMVV, and LELLVAFLQAYVFAILTCIYL.

The protein belongs to the ATPase A chain family. As to quaternary structure, F-type ATPases have 2 components, CF(1) - the catalytic core - and CF(0) - the membrane proton channel. CF(1) has five subunits: alpha(3), beta(3), gamma(1), delta(1), epsilon(1). CF(0) has four main subunits: a, b, b' and c.

It is found in the cell inner membrane. Functionally, key component of the proton channel; it plays a direct role in the translocation of protons across the membrane. In Rhodopseudomonas palustris (strain BisA53), this protein is ATP synthase subunit a.